The primary structure comprises 301 residues: Pseudouridine-5'-phosphate glycosidase (301 aa).

Glu-25 acts as the Proton donor in catalysis. Substrate is bound by residues Lys-86 and Val-106. Asp-138 lines the Mn(2+) pocket. Ser-140–Asp-142 serves as a coordination point for substrate. Residue Lys-159 is the Nucleophile of the active site.

This sequence belongs to the pseudouridine-5'-phosphate glycosidase family. In terms of assembly, homotrimer. The cofactor is Mn(2+).

The enzyme catalyses D-ribose 5-phosphate + uracil = psi-UMP + H2O. Functionally, catalyzes the reversible cleavage of pseudouridine 5'-phosphate (PsiMP) to ribose 5-phosphate and uracil. Functions biologically in the cleavage direction, as part of a pseudouridine degradation pathway. The sequence is that of Pseudouridine-5'-phosphate glycosidase from Geobacillus kaustophilus (strain HTA426).